The primary structure comprises 237 residues: Protein GrpE (237 aa).

Disordered stretches follow at residues 24-56 and 204-237; these read LILEDSEAEAGTSSGETAAEPSPDPGEALKQLQ and SAGSPSSEPSPPAQATIEAGPENTPASPQNPQPS.

The protein belongs to the GrpE family. Homodimer.

The protein resides in the cytoplasm. Its function is as follows. Participates actively in the response to hyperosmotic and heat shock by preventing the aggregation of stress-denatured proteins, in association with DnaK and GrpE. It is the nucleotide exchange factor for DnaK and may function as a thermosensor. Unfolded proteins bind initially to DnaJ; upon interaction with the DnaJ-bound protein, DnaK hydrolyzes its bound ATP, resulting in the formation of a stable complex. GrpE releases ADP from DnaK; ATP binding to DnaK triggers the release of the substrate protein, thus completing the reaction cycle. Several rounds of ATP-dependent interactions between DnaJ, DnaK and GrpE are required for fully efficient folding. This Synechococcus sp. (strain JA-2-3B'a(2-13)) (Cyanobacteria bacterium Yellowstone B-Prime) protein is Protein GrpE.